Here is a 653-residue protein sequence, read N- to C-terminus: Modification methylase StsI (653 aa).

This sequence belongs to the N(4)/N(6)-methyltransferase family. As to quaternary structure, monomer.

The enzyme catalyses a 2'-deoxyadenosine in DNA + S-adenosyl-L-methionine = an N(6)-methyl-2'-deoxyadenosine in DNA + S-adenosyl-L-homocysteine + H(+). Its function is as follows. An alpha subtype methylase that recognizes the double-stranded sequence 5'-GGATG-3' in one strand and 3'-CATCC-5' in the other, methylates A of both strands, and protects the DNA from cleavage by the StsI endonuclease. The 2 domains of the protein participate in modification of the two strands. This is Modification methylase StsI (stsIM) from Streptococcus sanguinis.